The primary structure comprises 629 residues: G1-specific transcription factors activator MSA1 (629 aa).

The segment covering 1–11 (MDKSMIKKRGR) has biased composition (basic residues). 5 disordered regions span residues 1 to 60 (MDKS…KRRL), 83 to 106 (STPT…NDSY), 217 to 286 (YCDT…SSLQ), 455 to 485 (VQVQ…NMNS), and 586 to 629 (PNLH…IDDQ). The segment covering 21 to 37 (PLQSPMAHSSMQVQKQG) has biased composition (polar residues). The segment covering 245–260 (IETSASPIGSARNNNI) has biased composition (polar residues). Composition is skewed to low complexity over residues 261 to 277 (LLSQ…QLKP) and 455 to 475 (VQVQ…RQFQ). Residue S268 is modified to Phosphoserine. Residues 614-629 (KQDDARTALKRLIDDQ) are compositionally biased toward basic and acidic residues.

As to quaternary structure, interacts with transcription complexes SCB-binding factor (SBF) and MCB-binding factor (MBF) at their target promoters. Interacts with MBP1 and SWI6. Post-translationally, phosphorylated by CDC28.

In terms of biological role, activator of G1-specific transcription factors, MBF and SBF. Promotes both the timing of G1-specific gene transcription and cell cycle initiation. Associates with SBF- and MBF-regulated target promoters and this binding is maximal during the G1 phase, prior to maximum budding. Affects cell cycle initiation by advancing the timing of transcription of G1-specific genes. Overexpression advances the timing of SBF-dependent transcription and budding. Depletion delays both indicators of cell cycle initiation. This is G1-specific transcription factors activator MSA1 (MSA1) from Saccharomyces cerevisiae (strain ATCC 204508 / S288c) (Baker's yeast).